The chain runs to 554 residues: Eukaryotic translation initiation factor 3 subunit D-2 (554 aa).

The interval 291–305 is RNA gate; it reads QFDLLTVNETALEPP. Positions 530–554 are disordered; it reads NAFDSDGNEDEETSEDRPFLKSMAN.

It belongs to the eIF-3 subunit D family. As to quaternary structure, component of the eukaryotic translation initiation factor 3 (eIF-3) complex. The eIF-3 complex interacts with pix.

Its subcellular location is the cytoplasm. Functionally, mRNA cap-binding component of the eukaryotic translation initiation factor 3 (eIF-3) complex, which is involved in protein synthesis of a specialized repertoire of mRNAs and, together with other initiation factors, stimulates binding of mRNA and methionyl-tRNAi to the 40S ribosome. The eIF-3 complex specifically targets and initiates translation of a subset of mRNAs involved in cell proliferation. In the eIF-3 complex, eif3d specifically recognizes and binds the 7-methylguanosine cap of a subset of mRNAs. The sequence is that of Eukaryotic translation initiation factor 3 subunit D-2 from Drosophila mojavensis (Fruit fly).